Reading from the N-terminus, the 217-residue chain is Small ribosomal subunit protein uS3 (217 aa).

In terms of domain architecture, KH type-2 spans Ile-38–Lys-106.

This sequence belongs to the universal ribosomal protein uS3 family. In terms of assembly, part of the 30S ribosomal subunit. Forms a tight complex with proteins S10 and S14.

In terms of biological role, binds the lower part of the 30S subunit head. Binds mRNA in the 70S ribosome, positioning it for translation. This Lactococcus lactis subsp. cremoris (strain MG1363) protein is Small ribosomal subunit protein uS3.